We begin with the raw amino-acid sequence, 443 residues long: Cobyrinate a,c-diamide synthase (443 aa).

The region spanning 248–433 (KIAVAYDKAF…LHNHAVANPY (186 aa)) is the GATase cobBQ-type domain. C327 (nucleophile) is an active-site residue.

This sequence belongs to the CobB/CbiA family. Mg(2+) serves as cofactor.

The catalysed reaction is cob(II)yrinate + 2 L-glutamine + 2 ATP + 2 H2O = cob(II)yrinate a,c diamide + 2 L-glutamate + 2 ADP + 2 phosphate + 2 H(+). The enzyme catalyses Ni-sirohydrochlorin + 2 L-glutamine + 2 ATP + 2 H2O = Ni-sirohydrochlorin a,c-diamide + 2 L-glutamate + 2 ADP + 2 phosphate + 2 H(+). Its pathway is cofactor biosynthesis; adenosylcobalamin biosynthesis; cob(II)yrinate a,c-diamide from sirohydrochlorin (anaerobic route): step 10/10. Functionally, catalyzes the ATP-dependent amidation of the two carboxylate groups at positions a and c of cobyrinate, using either L-glutamine or ammonia as the nitrogen source. Involved in the biosynthesis of the unique nickel-containing tetrapyrrole coenzyme F430, the prosthetic group of methyl-coenzyme M reductase (MCR), which plays a key role in methanogenesis and anaerobic methane oxidation. Catalyzes the ATP-dependent amidation of the two carboxylate groups at positions a and c of Ni-sirohydrochlorin, using L-glutamine or ammonia as the nitrogen source. The polypeptide is Cobyrinate a,c-diamide synthase (Methanocaldococcus jannaschii (strain ATCC 43067 / DSM 2661 / JAL-1 / JCM 10045 / NBRC 100440) (Methanococcus jannaschii)).